The chain runs to 597 residues: MTPGSRSAMRSRSVCGAIALAVLVTVSGCASLPDSSTPQAIGTINRDSPGSSVAAPAPGREPDLLLRDFFKASTDPTDRHLAARQFLTPGVSGRWDDAASATIVDKVDVLPETRSADQATYTIRANKVGQLEPGGLYVAEEGSFETRISLELQGGEWRISELPAGVILDRAQFLNTYQRKSLYFLDPAGTTVVPDPRWVSGAQDQMASQLIGLLIDGPKAALAPAVRNELGDGVSVRGPITKADGRTAQVGVGLGGIRIDFTGVPPMDAQQKQLFAAQVIWTLANAEISGPYVLLADGEPFDERFPNGWTTADVASMNPFATSSATVGLHALREGSMVSVTETGVTPVPGYFGAARNMRSLALSQDGKLVAAVADTGRPAPEPASSLMVGAYEDGAASVLEGGAITRPTWAPDNSAIWAAVNGNTVIRVLREPGTGRTSVVNVDAGAVTALGATITELRLSRDGVRAALIVDGKVYLAIVTQMPGGAYALTNPRAVAIGLGSPALSLDWSTSDTIVVARAASDIPVVQVAVDGSRMDALPSRNLTAPVVAVDASTTTEFVADSRAVFQLNNNDPAGDRYWREVPGLTGVKAIPVLPG.

Positions 1–28 (MTPGSRSAMRSRSVCGAIALAVLVTVSG) are cleaved as a signal peptide. Residue Cys29 is the site of N-palmitoyl cysteine attachment. Cys29 carries S-diacylglycerol cysteine lipidation. A compositionally biased stretch (polar residues) spans 39–51 (QAIGTINRDSPGS). The segment at 39 to 59 (QAIGTINRDSPGSSVAAPAPG) is disordered.

It belongs to the LpqB lipoprotein family.

The protein localises to the cell membrane. The protein is Lipoprotein LpqB of Rhodococcus opacus (strain B4).